The sequence spans 475 residues: Bifunctional protein HldE (475 aa).

Residues Met1–His321 are ribokinase. Position 197 to 200 (Asn197 to Glu200) interacts with ATP. Residue Asp266 is part of the active site. Residues Met346–Asn475 form a cytidylyltransferase region.

This sequence in the N-terminal section; belongs to the carbohydrate kinase PfkB family. It in the C-terminal section; belongs to the cytidylyltransferase family. As to quaternary structure, homodimer.

The catalysed reaction is D-glycero-beta-D-manno-heptose 7-phosphate + ATP = D-glycero-beta-D-manno-heptose 1,7-bisphosphate + ADP + H(+). The enzyme catalyses D-glycero-beta-D-manno-heptose 1-phosphate + ATP + H(+) = ADP-D-glycero-beta-D-manno-heptose + diphosphate. Its pathway is nucleotide-sugar biosynthesis; ADP-L-glycero-beta-D-manno-heptose biosynthesis; ADP-L-glycero-beta-D-manno-heptose from D-glycero-beta-D-manno-heptose 7-phosphate: step 1/4. The protein operates within nucleotide-sugar biosynthesis; ADP-L-glycero-beta-D-manno-heptose biosynthesis; ADP-L-glycero-beta-D-manno-heptose from D-glycero-beta-D-manno-heptose 7-phosphate: step 3/4. Functionally, catalyzes the phosphorylation of D-glycero-D-manno-heptose 7-phosphate at the C-1 position to selectively form D-glycero-beta-D-manno-heptose-1,7-bisphosphate. Its function is as follows. Catalyzes the ADP transfer from ATP to D-glycero-beta-D-manno-heptose 1-phosphate, yielding ADP-D-glycero-beta-D-manno-heptose. In Coxiella burnetii (strain RSA 331 / Henzerling II), this protein is Bifunctional protein HldE.